A 479-amino-acid polypeptide reads, in one-letter code: F-box protein SKIP17 (479 aa).

The region spanning 92-138 is the F-box domain; sequence NSNSWSLPPELTIKVFSMLDTKSMMQAAVCCTMFNKCAMDRLCYSHI. Residues 435–479 are disordered; sequence EMMEAEDDEVDEEDDSDDDTDDVSDEDESENDDDMGMGFDVDYLL. A compositionally biased stretch (acidic residues) spans 437 to 469; sequence MEAEDDEVDEEDDSDDDTDDVSDEDESENDDDM.

As to quaternary structure, part of a SCF (ASK-cullin-F-box) protein ligase complex. Interacts with SPK1B/ASK2.

It is found in the nucleus. The protein operates within protein modification; protein ubiquitination. Its function is as follows. Component of SCF(ASK-cullin-F-box) E3 ubiquitin ligase complexes, which may mediate the ubiquitination and subsequent proteasomal degradation of target proteins. This is F-box protein SKIP17 (SKIP17) from Arabidopsis thaliana (Mouse-ear cress).